We begin with the raw amino-acid sequence, 425 residues long: O-methyltransferase AMT9 (425 aa).

S-adenosyl-L-methionine is bound by residues 257 to 258 (GG), Asp280, 306 to 307 (DF), Arg322, and Arg323. Catalysis depends on His326, which acts as the Proton acceptor.

The protein belongs to the class I-like SAM-binding methyltransferase superfamily. Cation-independent O-methyltransferase family.

Its pathway is mycotoxin biosynthesis. In terms of biological role, O-methyltransferase; part of the gene clusters that mediate the biosynthesis of AM-toxins, host-selective toxins (HSTs) causing Alternaria blotch on apple, a worldwide distributed disease. AM-toxins are cyclic depsipeptides containing the 3 residues 2-hydroxy-isovaleric acid (2-HIV), dehydroalanine, L-alanine which are common for all 3 AM-toxins I to III. The fourth precursor is L-alpha-amino-methoxyphenyl-valeric acid (L-Amv) for AM-toxin I, L-alpha-amino-phenyl-valeric acid (L-Apv) for AM-toxin II, and L-alpha-amino-hydroxyphenyl-valeric acid (L-Ahv) for AM-toxin III. AM-toxins have two target sites for affecting susceptible apple cells; they cause invagination of the plasma membrane and electrolyte loss and chloroplast disorganization. The non-ribosomal peptide synthetase AMT1 contains 4 catalytic modules and is responsible for activation of each residue in AM-toxin. The aldo-keto reductase AMT2 catalyzes the conversion of 2-keto-isovaleric acid (2-KIV) to 2-hydroxy-isovaleric acid (2-HIV), one of the precursor residues incorporated by AMT1 during AM-toxin biosynthesis, by reduction of its ketone to an alcohol. The cytochrome P450 monooxygenase AMT3 and the thioesterase AMT4 are also important for AM-toxin production, but their exact function within the AM-toxin biosynthesis are not known yet. Up to 21 proteins (including AMT1 to AMT4) are predicted to be involved in AM-toxin biosynthesis since their expression ishighly up-regulated in AM-toxin-producing cultures. The chain is O-methyltransferase AMT9 from Alternaria alternata (Alternaria rot fungus).